We begin with the raw amino-acid sequence, 378 residues long: tRNA (guanine(37)-N(1))-methyltransferase (378 aa).

Residues His-196, 234 to 235 (DL), 262 to 263 (DA), and Asn-282 contribute to the S-adenosyl-L-methionine site.

This sequence belongs to the class I-like SAM-binding methyltransferase superfamily. TRM5/TYW2 family. In terms of assembly, monomer.

It is found in the mitochondrion matrix. Its subcellular location is the nucleus. It localises to the cytoplasm. It catalyses the reaction guanosine(37) in tRNA + S-adenosyl-L-methionine = N(1)-methylguanosine(37) in tRNA + S-adenosyl-L-homocysteine + H(+). In terms of biological role, specifically methylates the N1 position of guanosine-37 in various cytoplasmic and mitochondrial tRNAs. Methylation is not dependent on the nature of the nucleoside 5' of the target nucleoside. This is the first step in the biosynthesis of wybutosine (yW), a modified base adjacent to the anticodon of tRNAs and required for accurate decoding. The chain is tRNA (guanine(37)-N(1))-methyltransferase from Trichomonas vaginalis (strain ATCC PRA-98 / G3).